A 475-amino-acid polypeptide reads, in one-letter code: Enolase (475 aa).

Glutamine 179 provides a ligand contact to (2R)-2-phosphoglycerate. Glutamate 221 acts as the Proton donor in catalysis. Mg(2+) is bound by residues aspartate 258, glutamate 312, and aspartate 339. The (2R)-2-phosphoglycerate site is built by lysine 364, arginine 393, serine 394, and lysine 415. The Proton acceptor role is filled by lysine 364. The disordered stretch occupies residues 454–475 (STPAATPKKSPAKKTTKAKSKK). Over residues 463–475 (SPAKKTTKAKSKK) the composition is skewed to basic residues.

It belongs to the enolase family. Mg(2+) serves as cofactor.

It is found in the cell membrane. Its subcellular location is the cytoplasm. The protein localises to the secreted. It localises to the cell surface. The catalysed reaction is (2R)-2-phosphoglycerate = phosphoenolpyruvate + H2O. The protein operates within carbohydrate degradation; glycolysis; pyruvate from D-glyceraldehyde 3-phosphate: step 4/5. Functionally, catalyzes the reversible conversion of 2-phosphoglycerate (2-PG) into phosphoenolpyruvate (PEP). It is essential for the degradation of carbohydrates via glycolysis. 'Moonlights' as a plasminogen receptor. Binds host (chicken) plasminogen; enolase antiserum inhibits M.gallisepticum adherence to chicken embryo fibroblasts. The chain is Enolase from Mycoplasmoides gallisepticum (strain R(low / passage 15 / clone 2)) (Mycoplasma gallisepticum).